Here is a 217-residue protein sequence, read N- to C-terminus: MKIFIDTANVEEIRKASELGVLSGVTTNPSLIAKEGRDLKEVVEEICNIVDGPISAEVISLEYEKMIEEGRELSKLHKNIVIKIPMCEEGLKAVSVLSKEGIKTNVTLIFSSMQALLAARAGATYVSPFLGRLDDIGNPGIEVVEQIADMFKIHEIKTEIIAASVRTPMHVLEAAMAGSHIATIPYKVIIQMSKHALTDIGIEKFMKDYEKAFGENK.

The Schiff-base intermediate with substrate role is filled by Lys-83.

It belongs to the transaldolase family. Type 3B subfamily.

It is found in the cytoplasm. The enzyme catalyses D-sedoheptulose 7-phosphate + D-glyceraldehyde 3-phosphate = D-erythrose 4-phosphate + beta-D-fructose 6-phosphate. It functions in the pathway carbohydrate degradation; pentose phosphate pathway; D-glyceraldehyde 3-phosphate and beta-D-fructose 6-phosphate from D-ribose 5-phosphate and D-xylulose 5-phosphate (non-oxidative stage): step 2/3. Transaldolase is important for the balance of metabolites in the pentose-phosphate pathway. This Clostridium botulinum (strain Hall / ATCC 3502 / NCTC 13319 / Type A) protein is Probable transaldolase.